Consider the following 197-residue polypeptide: Imidazoleglycerol-phosphate dehydratase (197 aa).

The protein belongs to the imidazoleglycerol-phosphate dehydratase family.

Its subcellular location is the cytoplasm. It catalyses the reaction D-erythro-1-(imidazol-4-yl)glycerol 3-phosphate = 3-(imidazol-4-yl)-2-oxopropyl phosphate + H2O. The protein operates within amino-acid biosynthesis; L-histidine biosynthesis; L-histidine from 5-phospho-alpha-D-ribose 1-diphosphate: step 6/9. In Azorhizobium caulinodans (strain ATCC 43989 / DSM 5975 / JCM 20966 / LMG 6465 / NBRC 14845 / NCIMB 13405 / ORS 571), this protein is Imidazoleglycerol-phosphate dehydratase.